Here is a 1025-residue protein sequence, read N- to C-terminus: Putative receptor-like protein kinase At3g47110 (1025 aa).

The N-terminal stretch at 1–30 is a signal peptide; that stretch reads MGVPCIVMRLILVSALLVSVSLEHSDMVCA. The Extracellular segment spans residues 31-653; the sequence is QTIRLTEETD…LPRRHSSVRK (623 aa). N-linked (GlcNAc...) asparagine glycans are attached at residues asparagine 63 and asparagine 103. LRR repeat units follow at residues 104–128, 130–151, 152–175, 176–200, 202–224, 226–248, 249–271, 273–297, 298–323, and 325–344; these read LSFL…VGNL, RLQY…VLSN, CSSL…EFGS, LSKL…LGNL, SLQM…IARL, QMIF…IYNL, SSLI…DFGS, LPNL…LSNI, SSLR…RLQN, and LLLG…DLDF. 2 N-linked (GlcNAc...) asparagine glycosylation sites follow: asparagine 135 and asparagine 151. 2 N-linked (GlcNAc...) asparagine glycosylation sites follow: asparagine 188 and asparagine 199. Asparagine 247 carries N-linked (GlcNAc...) asparagine glycosylation. N-linked (GlcNAc...) asparagine glycosylation occurs at asparagine 296. Asparagine 331, asparagine 336, asparagine 350, and asparagine 374 each carry an N-linked (GlcNAc...) asparagine glycan. LRR repeat units lie at residues 351-374, 376-400, 401-424, 426-448, 449-472, 473-496, 498-520, 521-544, 546-567, 568-593, and 595-616; these read CSQL…FIAN, STQL…IGNL, VSLQ…LGEL, ELRK…LGNI, SGLT…LGSC, SYLL…LMEL, SLVV…IGKL, KFLL…LANC, SLEF…IRGL, TGLR…NFSK, and QNLN…VFRN. Residues asparagine 447, asparagine 458, asparagine 486, and asparagine 503 are each glycosylated (N-linked (GlcNAc...) asparagine). Residues asparagine 579, asparagine 590, asparagine 598, and asparagine 616 are each glycosylated (N-linked (GlcNAc...) asparagine). Residues 654–674 traverse the membrane as a helical segment; sequence IITICVSAVMAALLLLCLCVV. Residues 675-1025 are Cytoplasmic-facing; it reads YLCWYKLRVK…RESFFRDEET (351 aa). Threonine 716 carries the phosphothreonine modification. Residues 719–1020 form the Protein kinase domain; it reads FSSSNLIGSG…KLVSIRESFF (302 aa). ATP is bound by residues 725 to 733 and lysine 748; that span reads IGSGNFGAV. Phosphotyrosine is present on residues tyrosine 798 and tyrosine 843. The active-site Proton acceptor is aspartate 856. The residue at position 904 (tyrosine 904) is a Phosphotyrosine.

Belongs to the protein kinase superfamily. Ser/Thr protein kinase family.

The protein resides in the cell membrane. The enzyme catalyses L-seryl-[protein] + ATP = O-phospho-L-seryl-[protein] + ADP + H(+). It carries out the reaction L-threonyl-[protein] + ATP = O-phospho-L-threonyl-[protein] + ADP + H(+). The sequence is that of Putative receptor-like protein kinase At3g47110 from Arabidopsis thaliana (Mouse-ear cress).